Consider the following 115-residue polypeptide: Large ribosomal subunit protein bL19 (115 aa).

The protein belongs to the bacterial ribosomal protein bL19 family.

In terms of biological role, this protein is located at the 30S-50S ribosomal subunit interface and may play a role in the structure and function of the aminoacyl-tRNA binding site. This is Large ribosomal subunit protein bL19 from Lachnospira eligens (strain ATCC 27750 / DSM 3376 / VPI C15-48 / C15-B4) (Eubacterium eligens).